We begin with the raw amino-acid sequence, 153 residues long: Cytochrome c-type biogenesis protein CcmE (153 aa).

Topologically, residues 1–7 are cytoplasmic; the sequence is MKPRHKR. A helical; Signal-anchor for type II membrane protein transmembrane segment spans residues 8–28; sequence LAIAGGVLVAVGAIATLVLNA. The Periplasmic segment spans residues 29-153; the sequence is FQSNLVFFYS…SSQAATGDPR (125 aa). 2 residues coordinate heme: histidine 120 and tyrosine 124. The segment at 130–153 is disordered; sequence AEALKRAKEGGQMQSSQAATGDPR. A compositionally biased stretch (polar residues) spans 141–153; the sequence is QMQSSQAATGDPR.

The protein belongs to the CcmE/CycJ family.

It is found in the cell inner membrane. In terms of biological role, heme chaperone required for the biogenesis of c-type cytochromes. Transiently binds heme delivered by CcmC and transfers the heme to apo-cytochromes in a process facilitated by CcmF and CcmH. The protein is Cytochrome c-type biogenesis protein CcmE of Leptothrix cholodnii (strain ATCC 51168 / LMG 8142 / SP-6) (Leptothrix discophora (strain SP-6)).